The sequence spans 880 residues: GAS2-like protein 2 (880 aa).

A Calponin-homology (CH) domain is found at 32–159 (EAMKEDLAEW…CLLELGRRAW (128 aa)). Positions 180–200 (RRELALPPPDPSPPAPPRRQP) are disordered. Positions 185 to 198 (LPPPDPSPPAPPRR) are enriched in pro residues. Positions 201–273 (CHFRNLDQMV…HYLDKHDPCR (73 aa)) constitute a GAR domain. Disordered regions lie at residues 283 to 360 (SFLK…MAPF), 372 to 437 (WRQP…NPTP), 489 to 533 (ESVR…ELGR), and 676 to 880 (APTG…ESWV). The segment covering 301–315 (GPSQTQPTMTISRSQ) has biased composition (polar residues). The segment at 438–880 (QRLRAIEATT…PLPPEEESWV (443 aa)) is interaction with ADORA2A. Over residues 506-515 (RLPPARPPTP) the composition is skewed to pro residues. Over residues 725-734 (QDCSASTVSA) the composition is skewed to polar residues. 2 stretches are compositionally biased toward basic residues: residues 757–767 (KGRRTLRKPKR) and 774–785 (LKLRPRIRPRRD).

Belongs to the GAS2 family. In terms of assembly, interacts with ADORA2A (via its cytoplasmic C-terminal domain). Interacts with GNAS, GNAL, GNAQ, and GNA13. Interacts with MAPRE1. Expressed in bronchial and nasal epithelial cells (at protein level). Expressed in brain, kidney, lung, testis, fallopian tubes, and skeletal muscle. Expressed at low levels in stomach and colon.

It localises to the cytoplasm. The protein resides in the cytoskeleton. It is found in the cell membrane. Its subcellular location is the stress fiber. The protein localises to the cilium basal body. In terms of biological role, involved in the cross-linking of microtubules and microfilaments. Regulates microtubule dynamics and stability by interacting with microtubule plus-end tracking proteins, such as MAPRE1, to regulate microtubule growth along actin stress fibers. Enhances ADORA2-mediated adenylyl cyclase activation by acting as a scaffold to recruit trimeric G-protein complexes to ADORA2A. Regulates ciliary orientation and performance in cells located in the airway. The sequence is that of GAS2-like protein 2 (GAS2L2) from Homo sapiens (Human).